The primary structure comprises 207 residues: Uracil phosphoribosyltransferase (207 aa).

5-phospho-alpha-D-ribose 1-diphosphate is bound by residues Arg77, Arg102, and 129–137; that span reads DPMLATGGS. Uracil contacts are provided by residues Ile192 and 197-199; that span reads GDA. Asp198 lines the 5-phospho-alpha-D-ribose 1-diphosphate pocket.

It belongs to the UPRTase family. The cofactor is Mg(2+).

It carries out the reaction UMP + diphosphate = 5-phospho-alpha-D-ribose 1-diphosphate + uracil. The protein operates within pyrimidine metabolism; UMP biosynthesis via salvage pathway; UMP from uracil: step 1/1. Allosterically activated by GTP. In terms of biological role, catalyzes the conversion of uracil and 5-phospho-alpha-D-ribose 1-diphosphate (PRPP) to UMP and diphosphate. The chain is Uracil phosphoribosyltransferase from Mycobacterium marinum (strain ATCC BAA-535 / M).